The sequence spans 316 residues: Transcription initiation factor IIB (316 aa).

The segment at 11–42 (PRVTCPNHPDAILVEDYRAGDMICPECGLVVG) adopts a TFIIB-type zinc-finger fold. The Zn(2+) site is built by C15, H18, C34, and C37. 3 positions are modified to phosphoserine: S70, S76, and S92. 2 consecutive repeat copies span residues 124–200 (MADR…LILK) and 218–294 (FCSN…LIYP). K152, R154, K189, and K196 together coordinate DNA. The tract at residues 189–193 (KEIGR) is core promoter DNA-binding. K238 bears the N6-acetyllysine; by autocatalysis mark. Residues 244-316 (LVPGRSPISV…DTPVDKLPQL (73 aa)) form a necessary for TATA box-bound complex TBP formation region. R248 lines the DNA pocket. The segment at 249 to 252 (SPIS) is core promoter DNA-binding. 5 residues coordinate DNA: K272, A281, T284, R286, and R290. The tract at residues 283 to 286 (VTIR) is core promoter DNA-binding.

The protein belongs to the TFIIB family. As to quaternary structure, found in a ternary complex with TATA box-bound TBP. Part of a TFIID-containing RNA polymerase II pre-initiation complex (PIC) that is composed of TBP and at least GTF2A1, GTF2A2, GTF2E1, GTF2E2, GTF2F1, GTF2H2, GTF2H3, GTF2H4, GTF2H5, GTF2B, TCEA1, ERCC2, ERCC3, TAF1, TAF2, TAF3, TAF4, TAF5, TAF6, TAF7, TAF8, TAF9, TAF10, TAF11, TAF12 and TAF13. Associates with TFIID-TFIIA (DA complex) to form TFIID-TFIIA-TFIIB (DAB complex), which is then recognized by RNA polymerase II (Pol II). Found in a RNA polymerase II initiation complex. Interacts (via C-terminus) with TBP; this interaction with TATA box-bound TBP guides Pol II into the PIC. Interacts (via N-terminus) with Pol II. Interacts (via C-terminus) with SSU72; this interaction is inhibited by SYMPK. Interacts with NR2F1; this interaction is direct. Interacts with PGR. Interacts with ESR1. Interacts with GTF2F1 (via C-terminus and preferentially via acetylated form); this interaction prevents binding of GTF2B to GTF2F2. Interacts with GTF2F2 (via N-terminus); this interaction is inhibited in presence of GTF2F1. Interacts with the transcription elongation factor TCEA2. Interacts with HSF1 (via transactivation domain). Interacts with GPBP1. In terms of processing, acetylated. Autoacetylated; autoacetylation at Lys-238 stimulates transcription activation.

It is found in the nucleus. It localises to the chromosome. It carries out the reaction L-lysyl-[protein] + acetyl-CoA = N(6)-acetyl-L-lysyl-[protein] + CoA + H(+). In terms of biological role, general transcription factor that plays a role in transcription initiation by RNA polymerase II (Pol II). Involved in the pre-initiation complex (PIC) formation and Pol II recruitment at promoter DNA. Together with the TATA box-bound TBP forms the core initiation complex and provides a bridge between TBP and the Pol II-TFIIF complex. Released from the PIC early following the onset of transcription during the initiation and elongation transition and reassociates with TBP during the next transcription cycle. Associates with chromatin to core promoter-specific regions. Binds to two distinct DNA core promoter consensus sequence elements in a TBP-independent manner; these IIB-recognition elements (BREs) are localized immediately upstream (BREu), 5'-[GC][GC][GA]CGCC-3', and downstream (BREd), 5'-[GA]T[TGA][TG][GT][TG][TG]-3', of the TATA box element. Modulates transcription start site selection. Also exhibits autoacetyltransferase activity that contributes to the activated transcription. This chain is Transcription initiation factor IIB, found in Pongo abelii (Sumatran orangutan).